The primary structure comprises 525 residues: MLLPKPLKYAAIGGGVFVFGILIGWVIFPVILKSQIKKEMALSKKTDLRQMWEKVPFALDFKVYIFNYTNVDEIQKGAKPIVKEIGPYYFEEWKEKVEVEDHEENDTITYKRLDVFHFRPDLSGPGLTGEEVIIMPHLFILAMVATINREKPSMLNVVEKSINGIFDNPKDVFLRVKAMDIMFRGIIINCDRTEFAPKAACTKMKKDAVTGVIYEPNNQFRFSLFGTRNNTVNPDVVTVKRGIKNIMDVGQVVALNGKPQIDIWRDHCNEFQGTDGTVFPPFLTYKDRLQSFSFDLCRSFKAWFQKKTSYKGIKTNRYIANVGDFANDPELQCFCDTPDECLPKGIMDIRKCLKVPMYVSLPHFLETDTSVTNQVKGLTPDPNEHGIIADFEPLSGTLMDAKQRMQYNIKLLRTDKIAIFKDLPDSIVPCFWVHEGILLNKTFVKMLKHQLFIPKRIVGVIRWWMVSFGLIAVLAGVMYHFKDNIMGWAAKGESTTAKVNPEDGSNEQRGVSVIGQDREPPKVTM.

Residues 1–11 (MLLPKPLKYAA) lie on the Cytoplasmic side of the membrane. Residues 12–32 (IGGGVFVFGILIGWVIFPVIL) form a helical membrane-spanning segment. At 33–456 (KSQIKKEMAL…LKHQLFIPKR (424 aa)) the chain is on the extracellular side. N-linked (GlcNAc...) asparagine glycans are attached at residues asparagine 67, asparagine 105, and asparagine 229. Disulfide bonds link cysteine 268–cysteine 333, cysteine 297–cysteine 352, and cysteine 335–cysteine 341. Asparagine 440 carries N-linked (GlcNAc...) asparagine glycosylation. Residues 457–477 (IVGVIRWWMVSFGLIAVLAGV) traverse the membrane as a helical segment. Residues 478 to 525 (MYHFKDNIMGWAAKGESTTAKVNPEDGSNEQRGVSVIGQDREPPKVTM) are Cytoplasmic-facing. Positions 496-525 (TAKVNPEDGSNEQRGVSVIGQDREPPKVTM) are disordered. Residues 516-525 (QDREPPKVTM) are compositionally biased toward basic and acidic residues.

This sequence belongs to the CD36 family. In terms of tissue distribution, principal component of the olfactory cilia membrane. Localizes to the somata, dendritic neck and cilia of the olfactory neurons (at protein level). Not detected in the axons of ORNs, the cytoplasm of auxiliary cells or non-sensory structures. Expression is universal among ORNs but differential between neuron and sensillum types.

It localises to the cell membrane. Plays an olfactory role that is not restricted to pheromone sensitivity. May be involved in the odor detection properties of the olfactory receptor neurons (ORNs) rather than their differentiation and growth. The polypeptide is Sensory neuron membrane protein 1 (Antheraea polyphemus (Polyphemus moth)).